A 97-amino-acid polypeptide reads, in one-letter code: Histone H1.C2 (97 aa).

Residues 24-97 form a disordered region; it reads AAVPPKKAAP…KKAVKKAPKK (74 aa). Over residues 31 to 97 the composition is skewed to basic residues; sequence AAPKKAVAKK…KKAVKKAPKK (67 aa).

The protein localises to the nucleus. It is found in the chromosome. The sequence is that of Histone H1.C2 from Trypanosoma cruzi.